Reading from the N-terminus, the 326-residue chain is Ribosomal large subunit pseudouridine synthase D (326 aa).

Residues 18 to 91 (QRLDQALAEM…IPLDIVYEDE (74 aa)) form the S4 RNA-binding domain. The active site involves Asp-139.

The protein belongs to the pseudouridine synthase RluA family.

Its subcellular location is the cytoplasm. The enzyme catalyses uridine(1911/1915/1917) in 23S rRNA = pseudouridine(1911/1915/1917) in 23S rRNA. Functionally, responsible for synthesis of pseudouridine from uracil at positions 1911, 1915 and 1917 in 23S ribosomal RNA. The polypeptide is Ribosomal large subunit pseudouridine synthase D (rluD) (Escherichia coli O157:H7).